The sequence spans 238 residues: Probable transcriptional regulatory protein SAB0618 (238 aa).

It belongs to the TACO1 family. YeeN subfamily.

The protein localises to the cytoplasm. This chain is Probable transcriptional regulatory protein SAB0618, found in Staphylococcus aureus (strain bovine RF122 / ET3-1).